The sequence spans 595 residues: Chaperone protein HscA homolog (595 aa).

The protein belongs to the heat shock protein 70 family.

Chaperone involved in the maturation of iron-sulfur cluster-containing proteins. Has a low intrinsic ATPase activity which is markedly stimulated by HscB. The protein is Chaperone protein HscA homolog of Rickettsia akari (strain Hartford).